An 84-amino-acid chain; its full sequence is Sulfur carrier protein TusA (84 aa).

The active-site Cysteine persulfide intermediate is Cys21.

This sequence belongs to the sulfur carrier protein TusA family.

The protein localises to the cytoplasm. Its function is as follows. Sulfur carrier protein which probably makes part of a sulfur-relay system. This is Sulfur carrier protein TusA from Pseudomonas syringae pv. tomato (strain ATCC BAA-871 / DC3000).